We begin with the raw amino-acid sequence, 490 residues long: Probable cytosol aminopeptidase (490 aa).

Positions 262 and 267 each coordinate Mn(2+). Lys274 is a catalytic residue. Residues Asp285, Asp344, and Glu346 each contribute to the Mn(2+) site. Arg348 is a catalytic residue.

It belongs to the peptidase M17 family. Mn(2+) is required as a cofactor.

It localises to the cytoplasm. It carries out the reaction Release of an N-terminal amino acid, Xaa-|-Yaa-, in which Xaa is preferably Leu, but may be other amino acids including Pro although not Arg or Lys, and Yaa may be Pro. Amino acid amides and methyl esters are also readily hydrolyzed, but rates on arylamides are exceedingly low.. The enzyme catalyses Release of an N-terminal amino acid, preferentially leucine, but not glutamic or aspartic acids.. In terms of biological role, presumably involved in the processing and regular turnover of intracellular proteins. Catalyzes the removal of unsubstituted N-terminal amino acids from various peptides. This chain is Probable cytosol aminopeptidase, found in Xanthomonas axonopodis pv. citri (strain 306).